The primary structure comprises 432 residues: MPDYVNWLRHASPYINSHRDRTFVVMLPGEGVEHPNFGNIVHDLVLLHSLGARLVLVHGSRPQIEARLAARGLAPRYHRDLRVTDAPTLECVIDAVGSLRIAIEARLSMDMAASPMQGARLRVAGGNLVTARPIGVVEGVDYHHTGEVRRIDRKGIGRLLDERSIVLLSPLGYSPTGEIFNLACEDVAMRAAIDLEAEKLILYGAEQGLLDASGKLVRELRPQQVPAHLQRLGNSYQAELLDAAAQACRAGVKRSHIVSYTEDGALLSELFTRTGNGTLVAQEQFEQLREAGIEDVGGLIELIRPLEEQGILVRRSREVLEREIEQFSIVEREGLIIACAALYPIADSEAGELACLAVNPEYRHGGRGDELLERIEERARGLGLKTLFVLTTRTAHWFRERGFQPSSVERLPAARASLYNFQRNSQVFEKSL.

One can recognise an N-acetyltransferase domain in the interval 286-425 (EQLREAGIED…ASLYNFQRNS (140 aa)).

The protein belongs to the acetyltransferase family. ArgA subfamily.

Its subcellular location is the cytoplasm. The enzyme catalyses L-glutamate + acetyl-CoA = N-acetyl-L-glutamate + CoA + H(+). Its pathway is amino-acid biosynthesis; L-arginine biosynthesis; N(2)-acetyl-L-ornithine from L-glutamate: step 1/4. The chain is Amino-acid acetyltransferase from Pseudomonas aeruginosa (strain LESB58).